We begin with the raw amino-acid sequence, 109 residues long: Small ribosomal subunit protein uS17 (109 aa).

This sequence belongs to the universal ribosomal protein uS17 family. In terms of assembly, part of the 30S ribosomal subunit.

One of the primary rRNA binding proteins, it binds specifically to the 5'-end of 16S ribosomal RNA. This is Small ribosomal subunit protein uS17 from Methanosarcina mazei (strain ATCC BAA-159 / DSM 3647 / Goe1 / Go1 / JCM 11833 / OCM 88) (Methanosarcina frisia).